The sequence spans 368 residues: Glycoprotein UL18 (368 aa).

Residues 1 to 18 form the signal peptide; it reads MMTMWCLTLFVLWMLRVV. The segment at 19-114 is alpha-1-like; that stretch reads GMHVLRYGYT…EIALGYRSQS (96 aa). Asn-56, Asn-66, Asn-74, Asn-95, Asn-123, Asn-127, Asn-150, Asn-167, Asn-177, Asn-193, Asn-240, Asn-282, and Asn-291 each carry an N-linked (GlcNAc...) asparagine; by host glycan. Positions 115 to 208 are alpha-2-like; it reads VLTWTHECNT…VIYSGFQPPV (94 aa). The segment at 209-303 is alpha-3-like; the sequence is THPVVKGGVR…VEIPISVTSP (95 aa). Residues 321 to 342 traverse the membrane as a helical segment; sequence YNTMTISSVLLALLLCALLFAF.

As to quaternary structure, interacts with host LILRB1.

The protein localises to the host membrane. Plays a role in the protection against host NK cell cytotoxicity by interacting with and modulating the activity of the host inhibitory leukocyte Ig-like receptor 1/LILRB1, which is expressed on monocytes, dendritic cells, as well as subsets of T and NK cells. UL18 exerts an inhibitory effect on LIR-1+ NK cells, while it stimulates LIR-1- NK cell. These modulations prevent lysis of the infected cells by NK cells. This is Glycoprotein UL18 (H301) from Homo sapiens (Human).